Here is a 342-residue protein sequence, read N- to C-terminus: Cyclin-D3-1 (342 aa).

The segment covering 322–334 has biased composition (polar residues); the sequence is VGSPATNYESSAS. A disordered region spans residues 322-342; it reads VGSPATNYESSASSKRRRICR.

Belongs to the cyclin family. Cyclin D subfamily.

The sequence is that of Cyclin-D3-1 (CYCD3-1) from Oryza sativa subsp. japonica (Rice).